We begin with the raw amino-acid sequence, 186 residues long: uncharacterized protein (186 aa).

A Macro domain is found at 1-181; it reads MVSFSYKGNL…TFVSLASDFL (181 aa).

It belongs to the MacroD-type family.

This is an uncharacterized protein from Thermoplasma volcanium (strain ATCC 51530 / DSM 4299 / JCM 9571 / NBRC 15438 / GSS1).